A 303-amino-acid chain; its full sequence is Quinolinate synthase (303 aa).

Iminosuccinate contacts are provided by H25 and S42. A [4Fe-4S] cluster-binding site is contributed by C87. Iminosuccinate is bound by residues 113-115 (YVN) and S130. [4Fe-4S] cluster is bound at residue C174. Residues 200 to 202 (HPE) and T217 contribute to the iminosuccinate site. C260 is a [4Fe-4S] cluster binding site.

This sequence belongs to the quinolinate synthase family. Type 2 subfamily. Homodimer. [4Fe-4S] cluster is required as a cofactor.

It localises to the cytoplasm. The catalysed reaction is iminosuccinate + dihydroxyacetone phosphate = quinolinate + phosphate + 2 H2O + H(+). Its pathway is cofactor biosynthesis; NAD(+) biosynthesis; quinolinate from iminoaspartate: step 1/1. In terms of biological role, catalyzes the condensation of iminoaspartate with dihydroxyacetone phosphate to form quinolinate. The chain is Quinolinate synthase from Pyrococcus furiosus (strain ATCC 43587 / DSM 3638 / JCM 8422 / Vc1).